A 402-amino-acid chain; its full sequence is Propionate kinase (402 aa).

2 residues coordinate ATP: N11 and K18. N11 is a Mg(2+) binding site. R86 provides a ligand contact to substrate. D143 acts as the Proton donor/acceptor in catalysis. ATP contacts are provided by residues H175, 203 to 207, 278 to 280, and 326 to 330; these read HLGNG, DLR, and GIGEN.

The protein belongs to the acetokinase family. TdcD subfamily. As to quaternary structure, homodimer. It depends on Mg(2+) as a cofactor.

It carries out the reaction propanoate + ATP = propanoyl phosphate + ADP. Its pathway is amino-acid degradation; L-threonine degradation via propanoate pathway; propanoate from L-threonine: step 4/4. Catalyzes the conversion of propionyl phosphate and ADP to propionate and ATP. The chain is Propionate kinase from Salmonella typhimurium (strain D23580).